Reading from the N-terminus, the 158-residue chain is Transcription elongation factor GreA (158 aa).

Belongs to the GreA/GreB family.

Functionally, necessary for efficient RNA polymerase transcription elongation past template-encoded arresting sites. The arresting sites in DNA have the property of trapping a certain fraction of elongating RNA polymerases that pass through, resulting in locked ternary complexes. Cleavage of the nascent transcript by cleavage factors such as GreA or GreB allows the resumption of elongation from the new 3'terminus. GreA releases sequences of 2 to 3 nucleotides. The sequence is that of Transcription elongation factor GreA from Psychrobacter cryohalolentis (strain ATCC BAA-1226 / DSM 17306 / VKM B-2378 / K5).